A 469-amino-acid chain; its full sequence is Probable periplasmic serine endoprotease DegP-like (469 aa).

Positions 1-25 (MNRLLKQVCMVVVSSFMMASMLTHA) are cleaved as a signal peptide. Catalysis depends on charge relay system residues His114, Asp144, and Ser217. Substrate-binding positions include 215–217 (GNS) and 272–276 (LGVLI). PDZ domains lie at 261-352 (LKSD…YRDG) and 358-458 (SVTL…IRQG).

Belongs to the peptidase S1C family.

It localises to the periplasm. It carries out the reaction Acts on substrates that are at least partially unfolded. The cleavage site P1 residue is normally between a pair of hydrophobic residues, such as Val-|-Val.. Its function is as follows. Might be efficient in the degradation of transiently denatured and unfolded proteins which accumulate in the periplasm following stress conditions. The protein is Probable periplasmic serine endoprotease DegP-like of Marinomonas sp. (strain MWYL1).